Reading from the N-terminus, the 1429-residue chain is Autophagy-related protein 11 (1429 aa).

The segment at 71 to 99 (TQRSQPGASSPPLSELPLPRYNAHTPPNS) is disordered. The span at 80–89 (SPPLSELPLP) shows a compositional bias: low complexity. Coiled coils occupy residues 143–173 (VMLR…KEWS), 553–590 (DDLL…QTQA), 632–815 (LETL…LEDI), and 851–989 (EGDM…RLES). Residues 1024–1061 (DGTMHIQRTPRSERSLATTANPNDSDPSSSLRRSSTLN) form a disordered region. Residues 1042 to 1061 (TANPNDSDPSSSLRRSSTLN) are compositionally biased toward low complexity. Residues 1105–1143 (ADAVYRRVKDVEHMARKLQREARAYREKAHSFQKEAHDK) adopt a coiled-coil conformation. Residues 1209-1229 (SKSLQHDQAGETRKDGARGET) show a composition bias toward basic and acidic residues. 2 disordered regions span residues 1209–1241 (SKSL…DNPF) and 1336–1429 (SSRG…LIGP). Over residues 1230–1239 (ESLDDDENDN) the composition is skewed to acidic residues. Polar residues-rich tracts occupy residues 1345 to 1372 (ASET…QHMS) and 1383 to 1393 (QETPQQTNSIS).

It belongs to the ATG11 family. As to quaternary structure, homodimer.

The protein localises to the preautophagosomal structure membrane. It localises to the vacuole membrane. Functionally, involved in cytoplasm to vacuole transport (Cvt), pexophagy, mitophagy and nucleophagy. Recruits mitochondria for their selective degradation via autophagy (mitophagy) during starvation. Works as scaffold proteins that recruit ATG proteins to the pre-autophagosome (PAS), the site of vesicle/autophagosome formation. Required for the Cvt vesicles completion. In Neurospora crassa (strain ATCC 24698 / 74-OR23-1A / CBS 708.71 / DSM 1257 / FGSC 987), this protein is Autophagy-related protein 11 (apg-8).